A 150-amino-acid chain; its full sequence is FAD synthase (150 aa).

ATP-binding positions include 16 to 17 (VF), 21 to 24 (HVGH), and aspartate 102.

Belongs to the archaeal FAD synthase family. Homodimer. Requires a divalent metal cation as cofactor.

It carries out the reaction FMN + ATP + H(+) = FAD + diphosphate. Its pathway is cofactor biosynthesis; FAD biosynthesis; FAD from FMN: step 1/1. In terms of biological role, catalyzes the transfer of the AMP portion of ATP to flavin mononucleotide (FMN) to produce flavin adenine dinucleotide (FAD) coenzyme. In Thermococcus onnurineus (strain NA1), this protein is FAD synthase.